A 667-amino-acid chain; its full sequence is Transketolase 2 (667 aa).

Position 25 (His-25) interacts with substrate. Thiamine diphosphate is bound by residues His-65 and 113 to 115 (GPL). A Mg(2+)-binding site is contributed by Asp-154. Residues Gly-155 and Asn-184 each contribute to the thiamine diphosphate site. Mg(2+) contacts are provided by Asn-184 and Ile-186. His-260 lines the substrate pocket. His-260 contributes to the thiamine diphosphate binding site. Position 342 is an N6-acetyllysine (Lys-342). Substrate contacts are provided by Arg-357 and Ser-384. Glu-410 acts as the Proton donor in catalysis. Phe-436 is a thiamine diphosphate binding site. 3 residues coordinate substrate: His-460, Asp-468, and Arg-519.

It belongs to the transketolase family. As to quaternary structure, homodimer. Mg(2+) serves as cofactor. The cofactor is Ca(2+). It depends on Mn(2+) as a cofactor. Co(2+) is required as a cofactor. Requires thiamine diphosphate as cofactor.

The catalysed reaction is D-sedoheptulose 7-phosphate + D-glyceraldehyde 3-phosphate = aldehydo-D-ribose 5-phosphate + D-xylulose 5-phosphate. Functionally, catalyzes the reversible transfer of a two-carbon ketol group from sedoheptulose-7-phosphate to glyceraldehyde-3-phosphate, producing xylulose-5-phosphate and ribose-5-phosphate. Catalyzes the transfer of a two-carbon ketol group from a ketose donor to an aldose acceptor, via a covalent intermediate with the cofactor thiamine pyrophosphate. This Escherichia coli (strain K12) protein is Transketolase 2.